The following is a 291-amino-acid chain: Light-independent protochlorophyllide reductase iron-sulfur ATP-binding protein (291 aa).

ATP is bound by residues 10–15 and lysine 39; that span reads GIGKST. Serine 14 is a Mg(2+) binding site. 2 residues coordinate [4Fe-4S] cluster: cysteine 95 and cysteine 129. 180–181 serves as a coordination point for ATP; that stretch reads NR.

The protein belongs to the NifH/BchL/ChlL family. Homodimer. Protochlorophyllide reductase is composed of three subunits; ChlL, ChlN and ChlB. [4Fe-4S] cluster serves as cofactor.

It is found in the plastid. The protein resides in the chloroplast. The catalysed reaction is chlorophyllide a + oxidized 2[4Fe-4S]-[ferredoxin] + 2 ADP + 2 phosphate = protochlorophyllide a + reduced 2[4Fe-4S]-[ferredoxin] + 2 ATP + 2 H2O. It functions in the pathway porphyrin-containing compound metabolism; chlorophyll biosynthesis (light-independent). In terms of biological role, component of the dark-operative protochlorophyllide reductase (DPOR) that uses Mg-ATP and reduced ferredoxin to reduce ring D of protochlorophyllide (Pchlide) to form chlorophyllide a (Chlide). This reaction is light-independent. The L component serves as a unique electron donor to the NB-component of the complex, and binds Mg-ATP. This chain is Light-independent protochlorophyllide reductase iron-sulfur ATP-binding protein, found in Picea abies (Norway spruce).